The primary structure comprises 501 residues: Bifunctional purine biosynthesis protein PurH (501 aa).

The MGS-like domain maps to 1–144 (MKKRALISVF…KNFKDVVVLS (144 aa)).

The protein belongs to the PurH family.

The catalysed reaction is (6R)-10-formyltetrahydrofolate + 5-amino-1-(5-phospho-beta-D-ribosyl)imidazole-4-carboxamide = 5-formamido-1-(5-phospho-D-ribosyl)imidazole-4-carboxamide + (6S)-5,6,7,8-tetrahydrofolate. The enzyme catalyses IMP + H2O = 5-formamido-1-(5-phospho-D-ribosyl)imidazole-4-carboxamide. Its pathway is purine metabolism; IMP biosynthesis via de novo pathway; 5-formamido-1-(5-phospho-D-ribosyl)imidazole-4-carboxamide from 5-amino-1-(5-phospho-D-ribosyl)imidazole-4-carboxamide (10-formyl THF route): step 1/1. The protein operates within purine metabolism; IMP biosynthesis via de novo pathway; IMP from 5-formamido-1-(5-phospho-D-ribosyl)imidazole-4-carboxamide: step 1/1. The polypeptide is Bifunctional purine biosynthesis protein PurH (Clostridium perfringens (strain SM101 / Type A)).